A 228-amino-acid chain; its full sequence is PKHD-type hydroxylase Rmet_0838 (228 aa).

One can recognise a Fe2OG dioxygenase domain in the interval 78–179 (RVLPPMFNRY…RWASFFWAQS (102 aa)). The Fe cation site is built by H96, D98, and H160. Residue R170 participates in 2-oxoglutarate binding.

It depends on Fe(2+) as a cofactor. L-ascorbate is required as a cofactor.

The sequence is that of PKHD-type hydroxylase Rmet_0838 from Cupriavidus metallidurans (strain ATCC 43123 / DSM 2839 / NBRC 102507 / CH34) (Ralstonia metallidurans).